The following is a 456-amino-acid chain: General transcription factor IIE subunit 1 (456 aa).

In terms of domain architecture, HTH TFE/IIEalpha-type spans 11 to 100 (LDDLVKMVIR…LWYIDYKHII (90 aa)). The C4-type zinc-finger motif lies at 129–157 (CQTCHKVYTALDIPKLLNMDTGALACEIC). The tract at residues 345 to 402 (ESAPDSGDADGNGSNSGSGGSTIEGNDGGNGEHQNKKMKLDDSQTVSSMSQSDDDGKD) is disordered. The segment covering 347–357 (APDSGDADGNG) has biased composition (low complexity). Over residues 358–375 (SNSGSGGSTIEGNDGGNG) the composition is skewed to gly residues. Basic and acidic residues predominate over residues 377–386 (HQNKKMKLDD).

The protein belongs to the TFIIE alpha subunit family. TFIIE is a tetramer of two alpha and two beta subunits.

It is found in the nucleus. Functionally, recruits TFIIH to the initiation complex and stimulates the RNA polymerase II C-terminal domain kinase and DNA-dependent ATPase activities of TFIIH. Both TFIIH and TFIIE are required for promoter clearance by RNA polymerase. The chain is General transcription factor IIE subunit 1 (gtf2e1-1) from Dictyostelium discoideum (Social amoeba).